We begin with the raw amino-acid sequence, 644 residues long: Acetyl-coenzyme A synthetase 2 (644 aa).

Residues 189–192 (RGGK), threonine 307, and asparagine 331 each bind CoA. ATP is bound by residues 383–385 (GEP), 407–412 (DTWWQT), aspartate 496, and arginine 511. Serine 519 provides a ligand contact to CoA. ATP is bound at residue arginine 522. Valine 533, histidine 535, and valine 538 together coordinate Mg(2+). Lysine 605 carries the N6-acetyllysine modification.

The protein belongs to the ATP-dependent AMP-binding enzyme family. Mg(2+) is required as a cofactor. Acetylated. Deacetylation by the SIR2-homolog deacetylase activates the enzyme.

The enzyme catalyses acetate + ATP + CoA = acetyl-CoA + AMP + diphosphate. In terms of biological role, catalyzes the conversion of acetate into acetyl-CoA (AcCoA), an essential intermediate at the junction of anabolic and catabolic pathways. AcsA undergoes a two-step reaction. In the first half reaction, AcsA combines acetate with ATP to form acetyl-adenylate (AcAMP) intermediate. In the second half reaction, it can then transfer the acetyl group from AcAMP to the sulfhydryl group of CoA, forming the product AcCoA. This Pseudomonas putida (strain ATCC 47054 / DSM 6125 / CFBP 8728 / NCIMB 11950 / KT2440) protein is Acetyl-coenzyme A synthetase 2.